Reading from the N-terminus, the 1196-residue chain is ATP-dependent helicase/deoxyribonuclease subunit B (1196 aa).

Positions 823, 1149, 1152, and 1158 each coordinate [4Fe-4S] cluster.

It belongs to the helicase family. AddB/RexB type 2 subfamily. As to quaternary structure, heterodimer of AddA and RexB. Requires Mg(2+) as cofactor. [4Fe-4S] cluster serves as cofactor.

The heterodimer acts as both an ATP-dependent DNA helicase and an ATP-dependent, dual-direction single-stranded exonuclease. Recognizes the chi site generating a DNA molecule suitable for the initiation of homologous recombination. This subunit has 5' -&gt; 3' nuclease activity but not helicase activity. The polypeptide is ATP-dependent helicase/deoxyribonuclease subunit B (Enterococcus faecalis (strain ATCC 700802 / V583)).